The chain runs to 154 residues: Leghemoglobin-2 (154 aa).

Residues 3 to 151 (ALTESQAALV…LAIVIKKEMN (149 aa)) form the Globin domain. Ser-46 provides a ligand contact to heme b. At Ser-46 the chain carries Phosphoserine. Residue His-64 coordinates O2. Heme b contacts are provided by Lys-67, His-98, and Lys-101. Tyr-139 carries the post-translational modification Nitrated tyrosine.

Belongs to the plant globin family. In terms of assembly, monomer. Nitrated in effective nodules and particularly in hypoxic conditions; this mechanism may play a protective role in the symbiosis by buffering toxic peroxynitrite NO(2)(-). Nitration level decrease during nodule senescence. In terms of processing, phosphorylation at Ser-46 disrupts the molecular environment of its porphyrin ring oxygen binding pocket, thus leading to a reduced oxygen consumption and to the delivery of oxygen O(2) to symbiosomes. In terms of tissue distribution, root nodules.

Its subcellular location is the cytoplasm. It is found in the cytosol. It localises to the nucleus. Leghemoglobin that reversibly binds oxygen O(2) through a pentacoordinated heme iron. In root nodules, facilitates the diffusion of oxygen to the bacteroids while preventing the bacterial nitrogenase from being inactivated by buffering dioxygen, nitric oxide and carbon monoxide, and promoting the formation of reactive oxygen species (ROS, e.g. H(2)O(2)). This role is essential for symbiotic nitrogen fixation (SNF). The polypeptide is Leghemoglobin-2 (Lupinus luteus (European yellow lupine)).